The chain runs to 250 residues: Myelin basic protein (250 aa).

Basic and acidic residues predominate over residues 1-28 (MGNHSGKRELSAEKASKDGEIHRGEAGK). Residues 1–150 (MGNHSGKREL…SQRSKYLATA (150 aa)) form a disordered region. The residue at position 2 (G2) is an N-acetylalanine. Phosphoserine is present on residues S31 and S40. The segment covering 95 to 113 (FSRDAPGREDNTFKDRPSE) has biased composition (basic and acidic residues). At S96 the chain carries Phosphothreonine. Position 113 is a phosphoserine (E113). Position 122 is a phosphothreonine (E122). Residue T125 is modified to Phosphotyrosine. Phosphoserine is present on residues A135, R139, S141, and S144. Residues Y146 and L147 each carry the phosphotyrosine modification. T149 bears the Phosphothreonine mark. S151 is subject to Phosphoserine. S151 carries the phosphotyrosine modification. T152 is modified (phosphothreonine). Citrulline occurs at positions 157 and 163. Position 167 is a phosphothreonine (T167). S172 is modified (phosphoserine). R175 and R181 each carry omega-N-methylarginine. The segment at 175–250 (RFFSGDRGAP…SRSGSPMARR (76 aa)) is disordered. A Phosphoserine modification is found at S188. At T197 the chain carries Phosphothreonine. Residues 197-206 (THYGSLPQKS) show a composition bias toward polar residues. Y199 bears the Phosphotyrosine mark. The residue at position 206 (S206) is a Phosphoserine. Residues T211, T226, and T229 each carry the phosphothreonine modification. Q234 bears the Deamidated glutamine mark. Residue R239 is modified to Citrulline. At S241 the chain carries Phosphoserine. S245 bears the Phosphoserine; by UHMK1 mark. Residue R250 is modified to Citrulline.

The protein belongs to the myelin basic protein family. In terms of assembly, homodimer. In terms of processing, as in other animals, several charge isomers may be produced as a result of optional post-translational modifications, such as phosphorylation of serine or threonine residues, deamidation of glutamine or asparagine residues, citrullination and methylation of arginine residues. Post-translationally, methylated on arginine residues; decreases with the age of the animal, making MBP more cationic. Phosphorylated by TAOK2, VRK2, MAPK11, MAPK12, MAPK14 and MINK1. In terms of processing, proteolytically cleaved in B cell lysosomes by cathepsin CTSG which degrades the major immunogenic MBP epitope and prevents the activation of MBP-specific autoreactive T cells. As to expression, in the embryo, isoform 1-isoform 3 are found in neurons within the central nervous system (primarily in pioneer neurons important in the formation of the cortex) and the peripheral nervous system. They are also expressed in the thymus, gut, lung and kidney. In the adult, isoform 1-isoform 3 are highly expressed in the brain (mainly in brain regions rich in oligodendrocytes) and spleen. Lower levels are seen in the heart, kidney and lung. Isoform 2 is also found in cells of the immune system. The isoforms missing the 134 first amino acids (isoform 4-isoform 13) are almost exclusively produced in the myelin-forming cells, the mature oligodendrocytes.

It localises to the myelin membrane. The protein localises to the cytoplasm. The protein resides in the nucleus. In terms of biological role, the classic group of MBP isoforms (isoform 4-isoform 13) are with PLP the most abundant protein components of the myelin membrane in the CNS. They have a role in both its formation and stabilization. The non-classic group of MBP isoforms (isoform 1-isoform 3/Golli-MBPs) may preferentially have a role in the early developing brain long before myelination, maybe as components of transcriptional complexes, and may also be involved in signaling pathways in T-cells and neural cells. Differential splicing events combined to optional post-translational modifications give a wide spectrum of isomers, with each of them potentially having a specialized function. The chain is Myelin basic protein (Mbp) from Mus musculus (Mouse).